A 327-amino-acid chain; its full sequence is Methionyl-tRNA formyltransferase (327 aa).

Residue 121 to 124 (SLLP) coordinates (6S)-5,6,7,8-tetrahydrofolate.

This sequence belongs to the Fmt family.

The enzyme catalyses L-methionyl-tRNA(fMet) + (6R)-10-formyltetrahydrofolate = N-formyl-L-methionyl-tRNA(fMet) + (6S)-5,6,7,8-tetrahydrofolate + H(+). In terms of biological role, attaches a formyl group to the free amino group of methionyl-tRNA(fMet). The formyl group appears to play a dual role in the initiator identity of N-formylmethionyl-tRNA by promoting its recognition by IF2 and preventing the misappropriation of this tRNA by the elongation apparatus. This Burkholderia ambifaria (strain ATCC BAA-244 / DSM 16087 / CCUG 44356 / LMG 19182 / AMMD) (Burkholderia cepacia (strain AMMD)) protein is Methionyl-tRNA formyltransferase.